The sequence spans 266 residues: Signal peptidase I (266 aa).

Over 1 to 20 (MQTDNTKSNTNKTAKQEWGS) the chain is Cytoplasmic. The helical transmembrane segment at 21-41 (FAFVICIALLIRILIMEPFTV) threads the bilayer. Residues 42 to 266 (PTGSMKATIL…IFRNLYNTDA (225 aa)) lie on the Periplasmic side of the membrane. Residues S45 and K108 contribute to the active site.

It belongs to the peptidase S26 family.

It is found in the cell inner membrane. The catalysed reaction is Cleavage of hydrophobic, N-terminal signal or leader sequences from secreted and periplasmic proteins.. Functionally, complements E.coli mutants temperature-sensitive for LepB function. This chain is Signal peptidase I (lepB), found in Rickettsia rickettsii (strain Sheila Smith).